The sequence spans 107 residues: UPF0145 protein YbjQ (107 aa).

It belongs to the UPF0145 family.

This chain is UPF0145 protein YbjQ, found in Escherichia coli O139:H28 (strain E24377A / ETEC).